The following is a 110-amino-acid chain: DNA-binding protein Tneu_1679 (110 aa).

It belongs to the PDCD5 family.

The polypeptide is DNA-binding protein Tneu_1679 (Pyrobaculum neutrophilum (strain DSM 2338 / JCM 9278 / NBRC 100436 / V24Sta) (Thermoproteus neutrophilus)).